The following is a 125-amino-acid chain: Protein MGF 110-4L (125 aa).

Residues 1–29 form the signal peptide; the sequence is MLVVFFLGILGLLANQILGLPTQAGGHLR. N65 carries N-linked (GlcNAc...) asparagine; by host glycosylation. Residues 122 to 125 carry the Prevents secretion from ER motif; it reads KEDL.

This sequence belongs to the asfivirus MGF 110 family.

The protein resides in the virion. The protein localises to the host endoplasmic reticulum-Golgi intermediate compartment. Causes the redistribution of lumenal ER protein to an enlarged ERGIC compartment. The polypeptide is Protein MGF 110-4L (Ornithodoros (relapsing fever ticks)).